Here is a 455-residue protein sequence, read N- to C-terminus: Ectonucleoside triphosphate diphosphohydrolase 6 (455 aa).

Residues 1–12 are Cytoplasmic-facing; that stretch reads MRKIPNHGTLRM. A helical membrane pass occupies residues 13–32; it reads TKVAYPLGLCVGLFIYVAYI. Over 33–455 the chain is Lumenal; the sequence is KWHRASAAQA…SLKRQKVPAL (423 aa). E196 functions as the Proton acceptor in the catalytic mechanism. 2 disulfide bridges follow: C297-C327 and C387-C401.

Belongs to the GDA1/CD39 NTPase family. The cofactor is Mg(2+). Ca(2+) serves as cofactor. In terms of processing, N-glycosylated.

The protein resides in the golgi apparatus membrane. It is found in the secreted. The protein localises to the cell membrane. The catalysed reaction is a ribonucleoside 5'-diphosphate + H2O = a ribonucleoside 5'-phosphate + phosphate + H(+). The enzyme catalyses IDP + H2O = IMP + phosphate + H(+). It carries out the reaction GDP + H2O = GMP + phosphate + H(+). It catalyses the reaction UDP + H2O = UMP + phosphate + H(+). Catalyzes the hydrolysis of nucleoside triphosphates and diphosphates in a calcium- or magnesium-dependent manner. Has a strong preference for nucleoside diphosphates, preferentially hydrolyzes GDP, IDP, and UDP, with slower hydrolysis of CDP, ITP, GTP, CTP, ADP, and UTP and virtually no hydrolysis of ATP. The membrane bound form might support glycosylation reactions in the Golgi apparatus and, when released from cells, might catalyze the hydrolysis of extracellular nucleotides. The protein is Ectonucleoside triphosphate diphosphohydrolase 6 of Mus musculus (Mouse).